We begin with the raw amino-acid sequence, 570 residues long: CRISPR-associated protein Cas8a1/Csx13 (570 aa).

Disordered regions lie at residues 1–23 (MACM…AGLR) and 551–570 (GGEA…SEQS).

This sequence belongs to the CRISPR-associated protein Cas8a1/Csx13 family. Myxan subtype subfamily.

Its function is as follows. CRISPR (clustered regularly interspaced short palindromic repeat) is an adaptive immune system that provides protection against mobile genetic elements (viruses, transposable elements and conjugative plasmids). CRISPR clusters contain spacers, sequences complementary to antecedent mobile elements, and target invading nucleic acids. CRISPR clusters are transcribed and processed into CRISPR RNA (crRNA). Functionally, functions in an unknown fashion to stimulate transcription of fruA independently of the intracellular A- and E-developmental signals. The protein is CRISPR-associated protein Cas8a1/Csx13 (devT) of Myxococcus xanthus (strain DK1622).